We begin with the raw amino-acid sequence, 431 residues long: Argininosuccinate lyase (431 aa).

This sequence belongs to the lyase 1 family. Argininosuccinate lyase subfamily.

It is found in the cytoplasm. The enzyme catalyses 2-(N(omega)-L-arginino)succinate = fumarate + L-arginine. The protein operates within amino-acid biosynthesis; L-arginine biosynthesis; L-arginine from L-ornithine and carbamoyl phosphate: step 3/3. This is Argininosuccinate lyase from Xanthomonas campestris pv. campestris (strain ATCC 33913 / DSM 3586 / NCPPB 528 / LMG 568 / P 25).